A 734-amino-acid chain; its full sequence is Photosystem I P700 chlorophyll a apoprotein A2 (734 aa).

Transmembrane regions (helical) follow at residues 46-69, 135-158, 175-199, 273-291, 330-353, 369-395, 417-439, and 517-535; these read IFASHFGQLAIIFLWTSGNLFHVA, LYTGALFLLFLSAISLIAGWLHLQ, LNHHLSGLFGVSSLAWTGHLVHVAI, IAHHHLAIAFIFLVAGHMY, LHFQLGLALASLGVITSLVAQHMY, AALYTHHQYIAGFIMTGAFAHGAIFFI, AIISHLSWASLFLGFHTLGLYVH, and FLVHHAIALGLHTTTLILV. [4Fe-4S] cluster is bound by residues Cys559 and Cys568. Transmembrane regions (helical) follow at residues 575 to 596 and 643 to 665; these read AFYLAVFWMLNTIGWVTFYWHW and LSVWAWMFLFGHLVWATGFMFLI. Chlorophyll a-binding residues include His654, Met662, and Tyr670. A phylloquinone-binding site is contributed by Trp671. The helical transmembrane segment at 707 to 727 threads the bilayer; sequence LVGLAHFSVGYIFTYAAFLIA.

It belongs to the PsaA/PsaB family. As to quaternary structure, the PsaA/B heterodimer binds the P700 chlorophyll special pair and subsequent electron acceptors. PSI consists of a core antenna complex that captures photons, and an electron transfer chain that converts photonic excitation into a charge separation. The eukaryotic PSI reaction center is composed of at least 11 subunits. The cofactor is P700 is a chlorophyll a/chlorophyll a' dimer, A0 is one or more chlorophyll a, A1 is one or both phylloquinones and FX is a shared 4Fe-4S iron-sulfur center..

It localises to the plastid. The protein localises to the chloroplast thylakoid membrane. The catalysed reaction is reduced [plastocyanin] + hnu + oxidized [2Fe-2S]-[ferredoxin] = oxidized [plastocyanin] + reduced [2Fe-2S]-[ferredoxin]. In terms of biological role, psaA and PsaB bind P700, the primary electron donor of photosystem I (PSI), as well as the electron acceptors A0, A1 and FX. PSI is a plastocyanin-ferredoxin oxidoreductase, converting photonic excitation into a charge separation, which transfers an electron from the donor P700 chlorophyll pair to the spectroscopically characterized acceptors A0, A1, FX, FA and FB in turn. Oxidized P700 is reduced on the lumenal side of the thylakoid membrane by plastocyanin. The protein is Photosystem I P700 chlorophyll a apoprotein A2 of Nicotiana tabacum (Common tobacco).